The primary structure comprises 880 residues: GATOR2 complex protein MIOS-A (880 aa).

6 WD repeats span residues 60 to 102 (SDTP…NSKC), 113 to 157 (KHAR…TPEV), 185 to 224 (GQND…QKMF), 226 to 264 (NTKA…KPVL), 268 to 309 (EQPK…TPIG), and 399 to 441 (RLRA…KQYA). Residues 740 to 786 (VSCNFCGKSISYSCSSVPHQGRGFSQYGVSGSPTKSKFTSCPGCRKP) form a C4-type zinc finger. Residues Cys-742, Cys-745, Cys-780, Cys-783, Cys-793, Cys-832, Cys-835, His-837, His-840, His-843, Cys-854, Cys-859, and Cys-863 each contribute to the Zn(2+) site. The segment at 787–868 (LPRCALCLIN…CSCKCMQLDT (82 aa)) adopts an RING-type; atypical zinc-finger fold.

This sequence belongs to the WD repeat mio family. In terms of assembly, component of the GATOR2 subcomplex, composed of MIOS, SEC13, SEH1L, WDR24 and WDR59. The GATOR2 complex interacts with CASTOR1 and CASTOR2; the interaction is negatively regulated by arginine. The GATOR2 complex interacts with SESN1, SESN2 and SESN3; the interaction is negatively regulated by amino acids. Interacts with SAR1; the interaction is direct, disrupted by leucine and mediates the interaction of SAR1 with the GATOR2 complex to negatively regulate the TORC1 signaling upon leucine deprivation.

It is found in the lysosome membrane. With respect to regulation, the GATOR2 complex is negatively regulated by the upstream amino acid sensors CASTOR1 and SESN2, which sequester the GATOR2 complex in absence of amino acids. In the presence of abundant amino acids, GATOR2 is released from CASTOR1 and SESN2 and activated. As a component of the GATOR2 complex, functions as an activator of the amino acid-sensing branch of the mTORC1 signaling pathway. The GATOR2 complex indirectly activates mTORC1 through the inhibition of the GATOR1 subcomplex. GATOR2 probably acts as an E3 ubiquitin-protein ligase toward GATOR1. In the presence of abundant amino acids, the GATOR2 complex mediates ubiquitination of the NPRL2 core component of the GATOR1 complex, leading to GATOR1 inactivation. In the absence of amino acids, GATOR2 is inhibited, activating the GATOR1 complex. Within the GATOR2 complex, MIOS is required to prevent autoubiquitination of WDR24, the catalytic subunit of the complex. In Xenopus laevis (African clawed frog), this protein is GATOR2 complex protein MIOS-A.